The primary structure comprises 277 residues: NAD kinase (277 aa).

Aspartate 67 serves as the catalytic Proton acceptor. Residues 67 to 68 (DG), arginine 72, 137 to 138 (NE), lysine 148, arginine 165, aspartate 167, 178 to 183 (TGYAMS), leucine 202, and glutamine 236 each bind NAD(+).

It belongs to the NAD kinase family. A divalent metal cation is required as a cofactor.

The protein resides in the cytoplasm. The catalysed reaction is NAD(+) + ATP = ADP + NADP(+) + H(+). Its function is as follows. Involved in the regulation of the intracellular balance of NAD and NADP, and is a key enzyme in the biosynthesis of NADP. Catalyzes specifically the phosphorylation on 2'-hydroxyl of the adenosine moiety of NAD to yield NADP. This chain is NAD kinase, found in Pyrococcus abyssi (strain GE5 / Orsay).